Reading from the N-terminus, the 347-residue chain is NADH-ubiquinone oxidoreductase chain 2 (347 aa).

Transmembrane regions (helical) follow at residues 1–21 (MNPLAQPIIYSTIFAGTLITA), 25–45 (HWFLAWVGLEMNMLAFIPVLT), 55–75 (AAIKYFLVQATASMILMMAIL), 96–116 (LMILTALAMKLGMAPFHFWVP), 123–143 (TLTSGLLLLTWQKLAPISIMY), 145–165 (IFPVMNVNILLTFSILSIMVG), 178–198 (ILAYSSITHVGWMTAVLPYNP), 199–219 (NITIFNLTIYIVLTTTAFLAL), 237–257 (LTWLLPLIPSTLLSLGGLPPL), 274–294 (GTLIIPTIMAIVTLINLYFYM), and 324–344 (LLLPTLTILTTLLLPIAPLTF).

This sequence belongs to the complex I subunit 2 family. Core subunit of respiratory chain NADH dehydrogenase (Complex I) which is composed of 45 different subunits. Interacts with TMEM242.

Its subcellular location is the mitochondrion inner membrane. The catalysed reaction is a ubiquinone + NADH + 5 H(+)(in) = a ubiquinol + NAD(+) + 4 H(+)(out). Core subunit of the mitochondrial membrane respiratory chain NADH dehydrogenase (Complex I) which catalyzes electron transfer from NADH through the respiratory chain, using ubiquinone as an electron acceptor. Essential for the catalytic activity and assembly of complex I. In Symphalangus syndactylus (Siamang), this protein is NADH-ubiquinone oxidoreductase chain 2.